We begin with the raw amino-acid sequence, 599 residues long: Elongation factor 4 (599 aa).

Residues 5–187 enclose the tr-type G domain; the sequence is SHIRNFSIIA…RLVAVIPPPT (183 aa). GTP contacts are provided by residues 17–22 and 134–137; these read DHGKST and NKMD.

It belongs to the TRAFAC class translation factor GTPase superfamily. Classic translation factor GTPase family. LepA subfamily.

It localises to the cell inner membrane. The catalysed reaction is GTP + H2O = GDP + phosphate + H(+). Required for accurate and efficient protein synthesis under certain stress conditions. May act as a fidelity factor of the translation reaction, by catalyzing a one-codon backward translocation of tRNAs on improperly translocated ribosomes. Back-translocation proceeds from a post-translocation (POST) complex to a pre-translocation (PRE) complex, thus giving elongation factor G a second chance to translocate the tRNAs correctly. Binds to ribosomes in a GTP-dependent manner. In Stutzerimonas stutzeri (strain A1501) (Pseudomonas stutzeri), this protein is Elongation factor 4.